The following is a 131-amino-acid chain: Large ribosomal subunit protein bL17 (131 aa).

Belongs to the bacterial ribosomal protein bL17 family. In terms of assembly, part of the 50S ribosomal subunit. Contacts protein L32.

The protein is Large ribosomal subunit protein bL17 of Bordetella avium (strain 197N).